The chain runs to 562 residues: uncharacterized protein (562 aa).

This is an uncharacterized protein from Saccharolobus islandicus (Sulfolobus islandicus).